Reading from the N-terminus, the 205-residue chain is Glycerol-3-phosphate acyltransferase (205 aa).

5 helical membrane passes run 3–23 (VFAL…SAIL), 53–73 (GVAA…VWLA), 80–100 (PFYL…PVFF), 112–132 (LGAI…TWLL), and 138–158 (GYSS…VWWF).

Belongs to the PlsY family. Probably interacts with PlsX.

It is found in the cell inner membrane. It carries out the reaction an acyl phosphate + sn-glycerol 3-phosphate = a 1-acyl-sn-glycero-3-phosphate + phosphate. It participates in lipid metabolism; phospholipid metabolism. Functionally, catalyzes the transfer of an acyl group from acyl-phosphate (acyl-PO(4)) to glycerol-3-phosphate (G3P) to form lysophosphatidic acid (LPA). This enzyme utilizes acyl-phosphate as fatty acyl donor, but not acyl-CoA or acyl-ACP. In Erwinia tasmaniensis (strain DSM 17950 / CFBP 7177 / CIP 109463 / NCPPB 4357 / Et1/99), this protein is Glycerol-3-phosphate acyltransferase.